A 361-amino-acid chain; its full sequence is tRNA-specific 2-thiouridylase MnmA (361 aa).

ATP contacts are provided by residues 6 to 13 and Ile-32; that span reads LVSGGVDS. The interaction with target base in tRNA stretch occupies residues 93 to 95; the sequence is NPD. Residue Cys-98 is the Nucleophile of the active site. A disulfide bridge connects residues Cys-98 and Cys-193. Residue Gly-121 coordinates ATP. The segment at 143–145 is interaction with tRNA; the sequence is KDQ. The active-site Cysteine persulfide intermediate is the Cys-193.

Belongs to the MnmA/TRMU family.

It localises to the cytoplasm. It carries out the reaction S-sulfanyl-L-cysteinyl-[protein] + uridine(34) in tRNA + AH2 + ATP = 2-thiouridine(34) in tRNA + L-cysteinyl-[protein] + A + AMP + diphosphate + H(+). Functionally, catalyzes the 2-thiolation of uridine at the wobble position (U34) of tRNA, leading to the formation of s(2)U34. This chain is tRNA-specific 2-thiouridylase MnmA, found in Porphyromonas gingivalis (strain ATCC BAA-308 / W83).